The following is a 202-amino-acid chain: MEHLVNIFVKSIFIENLALAFFLGMCTYLAVSKKVQTSMGLGVAVIVVMTITVPVNNLLYNYFLREGALAWAGFGDTDLTFVGLISYIGVIAAIVQILEMTLDKYVPSLYNALGIFLPLITVNCAILGASLFMVERDYNFVESVTFGFGSGVGWALAIVLLAGIREKMKYSDVPEGLDGLGITFIVVGLMSFGFLSFSGIQM.

A run of 6 helical transmembrane segments spans residues Ser11–Val31, Met39–Leu59, Leu79–Glu99, Gly114–Val134, Val144–Ile164, and Leu180–Ile200.

This sequence belongs to the NqrDE/RnfAE family. As to quaternary structure, composed of six subunits; NqrA, NqrB, NqrC, NqrD, NqrE and NqrF.

It localises to the cell inner membrane. It catalyses the reaction a ubiquinone + n Na(+)(in) + NADH + H(+) = a ubiquinol + n Na(+)(out) + NAD(+). NQR complex catalyzes the reduction of ubiquinone-1 to ubiquinol by two successive reactions, coupled with the transport of Na(+) ions from the cytoplasm to the periplasm. NqrA to NqrE are probably involved in the second step, the conversion of ubisemiquinone to ubiquinol. This Maridesulfovibrio salexigens (strain ATCC 14822 / DSM 2638 / NCIMB 8403 / VKM B-1763) (Desulfovibrio salexigens) protein is Na(+)-translocating NADH-quinone reductase subunit E.